Here is a 79-residue protein sequence, read N- to C-terminus: Transcriptional regulator SplA (79 aa).

Regulator of the spore photoproduct lyase operon (splAB). This is Transcriptional regulator SplA (splA) from Bacillus subtilis (strain 168).